The following is a 270-amino-acid chain: Putative phosphoenolpyruvate synthase regulatory protein (270 aa).

150–157 is an ADP binding site; it reads GVSRCGKT.

Belongs to the pyruvate, phosphate/water dikinase regulatory protein family. PSRP subfamily.

It catalyses the reaction [pyruvate, water dikinase] + ADP = [pyruvate, water dikinase]-phosphate + AMP + H(+). The enzyme catalyses [pyruvate, water dikinase]-phosphate + phosphate + H(+) = [pyruvate, water dikinase] + diphosphate. Bifunctional serine/threonine kinase and phosphorylase involved in the regulation of the phosphoenolpyruvate synthase (PEPS) by catalyzing its phosphorylation/dephosphorylation. This Shewanella piezotolerans (strain WP3 / JCM 13877) protein is Putative phosphoenolpyruvate synthase regulatory protein.